The primary structure comprises 599 residues: Kelch-like protein 41a (599 aa).

One can recognise a BTB domain in the interval 32–102 (VDCILKVGDR…LYSADIDITD (71 aa)). The BACK domain occupies 137 to 239 (CLAIFRMGLV…PEKYLKEKVE (103 aa)). Kelch repeat units lie at residues 339 to 391 (LLYV…EFEN), 393 to 440 (LFAV…SQNG), 441 to 488 (LVYC…VHKG), 489 to 535 (KIVV…SVDG), and 537 to 591 (LYAV…SMRL).

The protein localises to the cytoplasm. It localises to the cytoskeleton. Its subcellular location is the sarcoplasmic reticulum membrane. The protein resides in the endoplasmic reticulum membrane. Its function is as follows. Involved in skeletal muscle development and differentiation. The protein is Kelch-like protein 41a (klhl41a) of Danio rerio (Zebrafish).